The primary structure comprises 194 residues: Peptidyl-tRNA hydrolase (194 aa).

Residue Tyr16 participates in tRNA binding. His21 acts as the Proton acceptor in catalysis. 3 residues coordinate tRNA: Phe67, Asn69, and Asn115.

Belongs to the PTH family. As to quaternary structure, monomer.

The protein resides in the cytoplasm. It carries out the reaction an N-acyl-L-alpha-aminoacyl-tRNA + H2O = an N-acyl-L-amino acid + a tRNA + H(+). Functionally, hydrolyzes ribosome-free peptidyl-tRNAs (with 1 or more amino acids incorporated), which drop off the ribosome during protein synthesis, or as a result of ribosome stalling. Catalyzes the release of premature peptidyl moieties from peptidyl-tRNA molecules trapped in stalled 50S ribosomal subunits, and thus maintains levels of free tRNAs and 50S ribosomes. The sequence is that of Peptidyl-tRNA hydrolase from Shigella boydii serotype 18 (strain CDC 3083-94 / BS512).